We begin with the raw amino-acid sequence, 611 residues long: tRNA uridine 5-carboxymethylaminomethyl modification enzyme MnmG (611 aa).

Residues 12 to 17, Val124, and Ser179 each bind FAD; that span reads GGGHAG. NAD(+) is bound at residue 271 to 285; the sequence is GPRYCPSVEDKIVRF. Gln368 is a binding site for FAD.

Belongs to the MnmG family. Homodimer. Heterotetramer of two MnmE and two MnmG subunits. It depends on FAD as a cofactor.

It localises to the cytoplasm. Functionally, NAD-binding protein involved in the addition of a carboxymethylaminomethyl (cmnm) group at the wobble position (U34) of certain tRNAs, forming tRNA-cmnm(5)s(2)U34. The protein is tRNA uridine 5-carboxymethylaminomethyl modification enzyme MnmG of Mycoplasma mobile (strain ATCC 43663 / 163K / NCTC 11711) (Mesomycoplasma mobile).